Here is a 756-residue protein sequence, read N- to C-terminus: Serine/threonine-protein kinase tousled-like 1-B (756 aa).

Low complexity-rich tracts occupy residues 1–12 and 23–34; these read MSVQSNSNSSGS and STGSPTPGSVSP. 2 disordered regions span residues 1-56 and 69-185; these read MSVQ…LDPR and VSGN…QNSS. Residues 45-56 are compositionally biased toward basic and acidic residues; that stretch reads EGMDELHSLDPR. A compositionally biased stretch (gly residues) spans 72–85; sequence NTGGSTGSASGGPK. Residues 93–103 are compositionally biased toward low complexity; the sequence is SSHSFGSLGSS. The segment covering 104–120 has biased composition (basic and acidic residues); that stretch reads SDKESETPEKKHFESSR. The stretch at 243 to 268 forms a coiled coil; that stretch reads DLRRQIDEQQKLLERFKERLNKCTTM. Residues 339 to 375 form a disordered region; the sequence is KLLAKRKPSSTPSSQSPTPNESKQRKTKAVNGADNDP. Low complexity predominate over residues 347-357; sequence SSTPSSQSPTP. A coiled-coil region spans residues 397–435; it reads FKLRLGHLKKEEAEIQAELERLERVRNLHIRELKRINNE. The region spanning 450-728 is the Protein kinase domain; the sequence is YLLLHLLGRG…VHQLGSDSYL (279 aa). ATP-binding positions include 456–464 and lysine 479; that span reads LGRGGFSEV. The Proton acceptor role is filled by aspartate 580. The disordered stretch occupies residues 734–756; that stretch reads RSNSSGNLQATPASPAPSGIISY. The span at 735–745 shows a compositional bias: polar residues; sequence SNSSGNLQATP.

The protein belongs to the protein kinase superfamily. Ser/Thr protein kinase family. Mg(2+) is required as a cofactor.

The protein localises to the nucleus. The catalysed reaction is L-seryl-[protein] + ATP = O-phospho-L-seryl-[protein] + ADP + H(+). It catalyses the reaction L-threonyl-[protein] + ATP = O-phospho-L-threonyl-[protein] + ADP + H(+). The polypeptide is Serine/threonine-protein kinase tousled-like 1-B (tlk1b) (Danio rerio (Zebrafish)).